Here is a 358-residue protein sequence, read N- to C-terminus: tRNA-specific 2-thiouridylase MnmA (358 aa).

ATP-binding positions include 8–15 (GLSGGVDS) and Leu34. Cys95 functions as the Nucleophile in the catalytic mechanism. Cys95 and Cys194 form a disulfide bridge. Gly120 provides a ligand contact to ATP. The segment at 144–146 (KDQ) is interaction with tRNA. Cys194 functions as the Cysteine persulfide intermediate in the catalytic mechanism. Residues 299–300 (RY) are interaction with tRNA.

Belongs to the MnmA/TRMU family.

It is found in the cytoplasm. The enzyme catalyses S-sulfanyl-L-cysteinyl-[protein] + uridine(34) in tRNA + AH2 + ATP = 2-thiouridine(34) in tRNA + L-cysteinyl-[protein] + A + AMP + diphosphate + H(+). Catalyzes the 2-thiolation of uridine at the wobble position (U34) of tRNA, leading to the formation of s(2)U34. The sequence is that of tRNA-specific 2-thiouridylase MnmA from Synechocystis sp. (strain ATCC 27184 / PCC 6803 / Kazusa).